The chain runs to 217 residues: MSRAVRTLALGGLVLVGLSACVSVPRGQGSGAAVADHVSDSARQAEAARQAWLQAHPNWSFQGRVAISKDRNGGSGRIDWQQDGPRYRVQLSAPVTRQSWVLTGDTTSGAGRLEGLDGGPRSGPDAEQVLLEATGWTIPVNQMPDWVRALRIADAGAARVDLDAAGRPRTAQQDGWTIEFLAWTPAGADQPELPQRIEARNGEAKVRLLVDQWTVSP.

Positions 1–20 (MSRAVRTLALGGLVLVGLSA) are cleaved as a signal peptide. Residue cysteine 21 is the site of N-palmitoyl cysteine attachment. Cysteine 21 carries the S-diacylglycerol cysteine lipid modification.

It belongs to the LolB family. Monomer.

Its subcellular location is the cell outer membrane. Its function is as follows. Plays a critical role in the incorporation of lipoproteins in the outer membrane after they are released by the LolA protein. This Xanthomonas euvesicatoria pv. vesicatoria (strain 85-10) (Xanthomonas campestris pv. vesicatoria) protein is Outer-membrane lipoprotein LolB.